The primary structure comprises 73 residues: uncharacterized protein (73 aa).

This is an uncharacterized protein from Homo sapiens (Human).